A 303-amino-acid polypeptide reads, in one-letter code: Hemolysin E (303 aa).

A disulfide bridge links cysteine 87 with cysteine 285. The chain crosses the membrane as a helical span at residues 179 to 199 (AGAAAGIVAGPFGLIISYSIA).

Belongs to the hemolysin E family. In terms of assembly, monomer and oligomer. In periplasm, it is present as a monomer, while in outer membrane vesicles, it oligomerizes to form a pore structure that is active. The pore is formed by a dodecamer. In terms of processing, in periplasm, it forms a disulfide bond, which prevents the oligomerization. In outer membrane vesicles, the redox status prevents formation of the disulfide bond, leading to oligomerization and pore formation.

The protein localises to the secreted. It is found in the periplasm. The protein resides in the host cell membrane. Toxin, which has some hemolytic activity towards mammalian cells. Acts by forming a pore-like structure upon contact with mammalian cells. This Salmonella paratyphi A (strain ATCC 9150 / SARB42) protein is Hemolysin E (hlyE).